Here is a 312-residue protein sequence, read N- to C-terminus: Methionyl-tRNA formyltransferase (312 aa).

117-120 (SLLP) is a binding site for (6S)-5,6,7,8-tetrahydrofolate.

This sequence belongs to the Fmt family.

The enzyme catalyses L-methionyl-tRNA(fMet) + (6R)-10-formyltetrahydrofolate = N-formyl-L-methionyl-tRNA(fMet) + (6S)-5,6,7,8-tetrahydrofolate + H(+). In terms of biological role, attaches a formyl group to the free amino group of methionyl-tRNA(fMet). The formyl group appears to play a dual role in the initiator identity of N-formylmethionyl-tRNA by promoting its recognition by IF2 and preventing the misappropriation of this tRNA by the elongation apparatus. The protein is Methionyl-tRNA formyltransferase of Bordetella pertussis (strain Tohama I / ATCC BAA-589 / NCTC 13251).